Consider the following 693-residue polypeptide: Glycine--tRNA ligase beta subunit (693 aa).

It belongs to the class-II aminoacyl-tRNA synthetase family. As to quaternary structure, tetramer of two alpha and two beta subunits.

The protein resides in the cytoplasm. The catalysed reaction is tRNA(Gly) + glycine + ATP = glycyl-tRNA(Gly) + AMP + diphosphate. In Halalkalibacterium halodurans (strain ATCC BAA-125 / DSM 18197 / FERM 7344 / JCM 9153 / C-125) (Bacillus halodurans), this protein is Glycine--tRNA ligase beta subunit (glyS).